The chain runs to 121 residues: Large ribosomal subunit protein bL12 (121 aa).

Belongs to the bacterial ribosomal protein bL12 family. Homodimer. Part of the ribosomal stalk of the 50S ribosomal subunit. Forms a multimeric L10(L12)X complex, where L10 forms an elongated spine to which 2 to 4 L12 dimers bind in a sequential fashion. Binds GTP-bound translation factors.

Functionally, forms part of the ribosomal stalk which helps the ribosome interact with GTP-bound translation factors. Is thus essential for accurate translation. The protein is Large ribosomal subunit protein bL12 of Aeromonas hydrophila subsp. hydrophila (strain ATCC 7966 / DSM 30187 / BCRC 13018 / CCUG 14551 / JCM 1027 / KCTC 2358 / NCIMB 9240 / NCTC 8049).